A 282-amino-acid polypeptide reads, in one-letter code: Aquaporin-6 (282 aa).

The Cytoplasmic segment spans residues 1–25; that stretch reads MDAVEPGGRGWASMLACRLWKAISR. The chain crosses the membrane as a helical span at residues 26–46; it reads ALFAEFLATGLYVFFGVGSVM. Residues 47–54 are Extracellular-facing; sequence RWPTALPS. A helical membrane pass occupies residues 55–73; it reads VLQIAITFNLVTAMAVQVT. Topologically, residues 74–78 are cytoplasmic; that stretch reads WKASG. Positions 79-88 form an intramembrane region, discontinuously helical; the sequence is AHANPAVTLA. Positions 82–84 match the NPA 1 motif; sequence NPA. The Cytoplasmic segment spans residues 89–99; sequence FLVGSHISLPR. A helical transmembrane segment spans residues 100-121; that stretch reads AVAYVAAQLVGATVGAALLYGV. Topologically, residues 122-141 are extracellular; it reads MPGDIRETLGINVVRNSVST. The helical transmembrane segment at 142 to 162 threads the bilayer; the sequence is GQAVAVELLLTLQLVLCVFAS. Topologically, residues 163 to 168 are cytoplasmic; the sequence is TDSRQT. The chain crosses the membrane as a helical span at residues 169 to 188; the sequence is SGSPATMIGISVALGHLIGI. Residues 189-192 lie on the Extracellular side of the membrane; it reads HFTG. Residues 193–205 constitute an intramembrane region (discontinuously helical); it reads CSMNPARSFGPAI. Residues 196-198 carry the NPA 2 motif; sequence NPA. Residues 206–213 are Extracellular-facing; sequence IIGKFTVH. A helical membrane pass occupies residues 214-234; sequence WVFWVGPLMGALLASLIYNFV. At 235–282 the chain is on the cytoplasmic side; that stretch reads LFPDTKTLAQRLAILTGTVEVGTGAGAGAEPLKKESQPGSGAVEMESV. The disordered stretch occupies residues 260–282; that stretch reads GAGAEPLKKESQPGSGAVEMESV.

The protein belongs to the MIP/aquaporin (TC 1.A.8) family. Homotetramer; each monomer provides an independent solute pore.

It is found in the cytoplasmic vesicle membrane. The enzyme catalyses nitrate(in) = nitrate(out). The catalysed reaction is iodide(out) = iodide(in). It catalyses the reaction bromide(in) = bromide(out). It carries out the reaction chloride(in) = chloride(out). The enzyme catalyses Na(+)(in) = Na(+)(out). The catalysed reaction is H2O(in) = H2O(out). It catalyses the reaction CO2(out) = CO2(in). It carries out the reaction NH4(+)(in) = NH4(+)(out). Aquaporins form homotetrameric transmembrane channels, with each monomer independently mediating water transport across the plasma membrane along its osmotic gradient. Unlike classical aquaporins, AQP6 is an intracellular channel with selective anion permeability, particularly for nitrate, and exhibits very low water permeability. It may also facilitate the transport of gases, such as CO2 and NH4(+), as demonstrated in vitro. This Homo sapiens (Human) protein is Aquaporin-6.